Reading from the N-terminus, the 498-residue chain is Zinc finger protein 682 (498 aa).

Positions 4-75 (LTFRDVTIEF…KRHETIAKPP (72 aa)) constitute a KRAB domain. 10 consecutive C2H2-type zinc fingers follow at residues 173 to 195 (FKCM…KIIH), 201 to 223 (CICE…KRIH), 229 to 251 (YKCE…KRIH), 257 to 279 (YKCE…KKIH), 285 to 307 (YTCE…KTIH), 313 to 335 (YKCK…ERTH), 341 to 363 (YKCE…KVIH), 369 to 391 (YKCE…KRIH), 397 to 419 (YKCE…KRIH), and 425 to 447 (YNCE…KKIH). A C2H2-type 11; degenerate zinc finger spans residues 453 to 475 (YKCEECGKAFKRCSHLNEHKRVQ).

The protein belongs to the krueppel C2H2-type zinc-finger protein family.

It localises to the nucleus. In terms of biological role, may be involved in transcriptional regulation. This is Zinc finger protein 682 (ZNF682) from Homo sapiens (Human).